The primary structure comprises 330 residues: MSTKNFRVSDGDWICPDKKCGNVNFARRTSCNRCGREKTTEAKMMKAGGTEIGKTLAEKSRGLFSANDWQCKTCSNVNWARRSECNMCNTPKYAKLEERTGYGGGFNERENVEYIEREESDGEYDEFGRKKKKYRGKAVGPASILKEVEDKESEGEEEDEDEDLSKYKLDEDEDEDDADLSKYNLDASEEEDSNKKKSNRRSRSKSRSSHSRSSSRSSSPSSSRSRSRSRSRSSSSSQSRSHSGSREHSRSRGSKSRSSSRSHRGSSSPRKRSYSSSSSSPERDRKRSRSRPSSPAVRKKRRTRSRSPERHHRSSSGSTHSGSRSSSKKK.

Residue Ser9 is modified to Phosphoserine. The segment at 9–40 (SDGDWICPDKKCGNVNFARRTSCNRCGREKTT) adopts a RanBP2-type 1 zinc-finger fold. 3 positions are modified to N6-acetyllysine: Lys18, Lys54, and Lys92. The segment at 65-94 (SANDWQCKTCSNVNWARRSECNMCNTPKYA) adopts a RanBP2-type 2 zinc-finger fold. The interval 117–330 (REESDGEYDE…SGSRSSSKKK (214 aa)) is disordered. Phosphoserine is present on residues Ser120, Ser153, Ser181, Ser188, and Ser193. The segment covering 150-163 (DKESEGEEEDEDED) has biased composition (acidic residues). Residues 151–324 (KESEGEEEDE…SSGSTHSGSR (174 aa)) form a required for nuclear targeting region. The segment covering 196-210 (KKSNRRSRSKSRSSH) has biased composition (basic residues). Composition is skewed to low complexity over residues 211–224 (SRSSSRSSSPSSSR) and 232–242 (RSSSSSQSRSH). Basic residues-rich tracts occupy residues 251–273 (SRGSKSRSSSRSHRGSSSPRKRS) and 297–314 (VRKKRRTRSRSPERHHRS). Low complexity predominate over residues 315–330 (SSGSTHSGSRSSSKKK).

It belongs to the ZRANB2 family. In terms of assembly, interacts with the C-terminal half of SNRNP70, the Arg/Ser-rich domain of AKAP17A as well as with U2AF1 and CLK1.

The protein resides in the nucleus. Functionally, splice factor required for alternative splicing of TRA2B/SFRS10 transcripts. Binds to ssRNA containing the consensus sequence 5'-AGGUAA-3'. May interfere with constitutive 5'-splice site selection. This Mus musculus (Mouse) protein is Zinc finger Ran-binding domain-containing protein 2 (Zranb2).